The following is a 132-amino-acid chain: Small ribosomal subunit protein uS8 (132 aa).

It belongs to the universal ribosomal protein uS8 family. Part of the 30S ribosomal subunit. Contacts proteins S5 and S12.

One of the primary rRNA binding proteins, it binds directly to 16S rRNA central domain where it helps coordinate assembly of the platform of the 30S subunit. In Geobacillus kaustophilus (strain HTA426), this protein is Small ribosomal subunit protein uS8.